Reading from the N-terminus, the 340-residue chain is UPF0324 membrane protein BA_5405/GBAA_5405/BAS5024 (340 aa).

10 helical membrane passes run 13–35, 40–59, 99–118, 128–150, 157–179, 189–211, 218–240, 255–277, 279–301, and 316–338; these read FGFS…LAEL, IMGQ…AAIG, VLVI…YGLT, GILT…APQV, TAVG…TLLY, YGVF…APGG, AVIV…GVWF, LPIP…GIIP, VVAG…GLGL, and FVAG…YALG.

The protein belongs to the UPF0324 family.

Its subcellular location is the cell membrane. This chain is UPF0324 membrane protein BA_5405/GBAA_5405/BAS5024, found in Bacillus anthracis.